The chain runs to 1222 residues: ATP-dependent helicase/nuclease subunit A (1222 aa).

Positions 39–495 (QKRTAQQIEA…ILLKENFRSQ (457 aa)) constitute a UvrD-like helicase ATP-binding domain. 60-67 (ASAGSGKT) provides a ligand contact to ATP. The UvrD-like helicase C-terminal domain occupies 524 to 810 (QLIAGSHAQT…NLMTIHKSKG (287 aa)).

It belongs to the helicase family. AddA subfamily. Heterodimer of AddA and AddB/RexB. Mg(2+) is required as a cofactor.

It catalyses the reaction Couples ATP hydrolysis with the unwinding of duplex DNA by translocating in the 3'-5' direction.. It carries out the reaction ATP + H2O = ADP + phosphate + H(+). The heterodimer acts as both an ATP-dependent DNA helicase and an ATP-dependent, dual-direction single-stranded exonuclease. Recognizes the chi site generating a DNA molecule suitable for the initiation of homologous recombination. The AddA nuclease domain is required for chi fragment generation; this subunit has the helicase and 3' -&gt; 5' nuclease activities. In Streptococcus pyogenes serotype M18 (strain MGAS8232), this protein is ATP-dependent helicase/nuclease subunit A.